A 151-amino-acid chain; its full sequence is Acidic phospholipase A2 6 (151 aa).

An N-terminal signal peptide occupies residues methionine 1 to leucine 27. 7 disulfide bridges follow: cysteine 38/cysteine 104, cysteine 54/cysteine 151, cysteine 56/cysteine 72, cysteine 71/cysteine 132, cysteine 78/cysteine 125, cysteine 88/cysteine 118, and cysteine 111/cysteine 123. Ca(2+) contacts are provided by tyrosine 55, glycine 57, and glycine 59. The active site involves histidine 75. Aspartate 76 contributes to the Ca(2+) binding site. The active site involves aspartate 126.

It belongs to the phospholipase A2 family. Group I subfamily. D49 sub-subfamily. Ca(2+) is required as a cofactor. In terms of tissue distribution, expressed by the venom gland.

It localises to the secreted. It carries out the reaction a 1,2-diacyl-sn-glycero-3-phosphocholine + H2O = a 1-acyl-sn-glycero-3-phosphocholine + a fatty acid + H(+). PLA2 catalyzes the calcium-dependent hydrolysis of the 2-acyl groups in 3-sn-phosphoglycerides. This chain is Acidic phospholipase A2 6, found in Tropidechis carinatus (Australian rough-scaled snake).